The following is a 563-amino-acid chain: Cystathionine gamma-synthase-like protein ankD (563 aa).

Positions 1–37 are disordered; it reads MGELGPASAQHGSDSISFSGSYTQPLGAPQPPNEPHA. Polar residues predominate over residues 10–24; the sequence is QHGSDSISFSGSYTQ.

Belongs to the trans-sulfuration enzymes family. MET7 subfamily. Pyridoxal 5'-phosphate serves as cofactor.

It carries out the reaction cyclo(L-arginyl-(Z)-dehydro-3,4-dihydroxytyrosyl) + O-acetyl-L-homoserine = cyclo(L-arginyl-(Z)-dehydro-4-O-homoseryl-tyrosyl) + acetate + H(+). It functions in the pathway secondary metabolite biosynthesis. Its function is as follows. Cystathionine gamma-synthase-like protein; part of the ank cluster that mediates the biosynthesis of NK13650 C, a highly modified cyclo-arginine-tyrosine dipeptide. AnkD catalyzes the attachment of L-homoserine moiety using O-acetyl-L-homoserine as co-substrate. Within the pathway, the cyclodipeptide synthase ankA acts as the scaffold-generating enzyme and is responsible for formation of the cyclo-Arg-Tyr diketopiperazine (cRY) from L-Arg and L-Tyr. The ankA product cRY is desaturated by the cytochrome P450 monooxygenase ankB to yield a dehydro-cyclodipeptide intermediate. The FAD-dependent monooxygenase ankC then installs the m-OH, ankD catalyzes the attachment of L-homoserine, and ankE ligates citrate to the ankD product to yield NK13650 B. The O-methyltransferase ankF is responsible for methylation of the C-17 phenol group of NK13650 B to produce NK13650 D. Amidation of NK13650 D with L-Asp by ankG then leads to the production of NK13650 C, whereas amidation of NK13650 B produces NK13650 A. The chain is Cystathionine gamma-synthase-like protein ankD from Aspergillus thermomutatus (Neosartorya pseudofischeri).